Reading from the N-terminus, the 626-residue chain is (+)-3-carene synthase 1, chloroplastic (626 aa).

A chloroplast-targeting transit peptide spans 1-45 (MSLISAVPLASSCVSKSLISSVREHTALRRAIATLQMSRRGKSVA). Mg(2+) contacts are provided by aspartate 377, aspartate 381, and aspartate 529. Residues 377-381 (DDMYD) carry the DDXXD motif motif.

This sequence belongs to the terpene synthase family. Tpsd subfamily. Mg(2+) serves as cofactor. Requires Mn(2+) as cofactor.

The protein localises to the plastid. It is found in the chloroplast. It carries out the reaction (2E)-geranyl diphosphate = (+)-car-3-ene + diphosphate. It catalyses the reaction (2E)-geranyl diphosphate = terpinolene + diphosphate. Its pathway is terpene metabolism; oleoresin biosynthesis. It participates in secondary metabolite biosynthesis; terpenoid biosynthesis. Monoterpene synthase (TPS) involved in the biosynthesis of monoterpene natural products included in conifer oleoresin secretions and volatile emissions; these compounds contribute to biotic and abiotic stress defense against herbivores and pathogens. Catalyzes the conversion of (2E)-geranyl diphosphate (GPP) to (+)-car-3-ene and, to a lower extent, to terpinolene. The polypeptide is (+)-3-carene synthase 1, chloroplastic (Pinus contorta (Shore pine)).